The primary structure comprises 126 residues: Holo-[acyl-carrier-protein] synthase (126 aa).

2 residues coordinate Mg(2+): aspartate 9 and glutamate 58.

Belongs to the P-Pant transferase superfamily. AcpS family. It depends on Mg(2+) as a cofactor.

The protein resides in the cytoplasm. The enzyme catalyses apo-[ACP] + CoA = holo-[ACP] + adenosine 3',5'-bisphosphate + H(+). Functionally, transfers the 4'-phosphopantetheine moiety from coenzyme A to a Ser of acyl-carrier-protein. The sequence is that of Holo-[acyl-carrier-protein] synthase from Enterobacter sp. (strain 638).